Reading from the N-terminus, the 66-residue chain is Large ribosomal subunit protein bL35 (66 aa).

Belongs to the bacterial ribosomal protein bL35 family.

The polypeptide is Large ribosomal subunit protein bL35 (Borreliella afzelii (strain PKo) (Borrelia afzelii)).